Reading from the N-terminus, the 581-residue chain is Aspartate--tRNA ligase (581 aa).

Glu-170 provides a ligand contact to L-aspartate. An aspartate region spans residues 194-197 (QLFK). Arg-216 lines the L-aspartate pocket. ATP contacts are provided by residues 216 to 218 (RDE) and Gln-225. An L-aspartate-binding site is contributed by His-440. ATP is bound at residue Glu-469. Arg-476 is a binding site for L-aspartate. 521 to 524 (GFDR) is a binding site for ATP.

Belongs to the class-II aminoacyl-tRNA synthetase family. Type 1 subfamily. In terms of assembly, homodimer.

Its subcellular location is the cytoplasm. The catalysed reaction is tRNA(Asp) + L-aspartate + ATP = L-aspartyl-tRNA(Asp) + AMP + diphosphate. In terms of biological role, catalyzes the attachment of L-aspartate to tRNA(Asp) in a two-step reaction: L-aspartate is first activated by ATP to form Asp-AMP and then transferred to the acceptor end of tRNA(Asp). The protein is Aspartate--tRNA ligase of Thermosipho africanus (strain TCF52B).